We begin with the raw amino-acid sequence, 155 residues long: 6,7-dimethyl-8-ribityllumazine synthase (155 aa).

5-amino-6-(D-ribitylamino)uracil-binding positions include Phe-23, 57 to 59, and 81 to 83; these read AFE and AVI. Position 86-87 (86-87) interacts with (2S)-2-hydroxy-3-oxobutyl phosphate; sequence ST. His-89 functions as the Proton donor in the catalytic mechanism. Position 114 (Phe-114) interacts with 5-amino-6-(D-ribitylamino)uracil. Arg-128 is a (2S)-2-hydroxy-3-oxobutyl phosphate binding site.

The protein belongs to the DMRL synthase family.

It carries out the reaction (2S)-2-hydroxy-3-oxobutyl phosphate + 5-amino-6-(D-ribitylamino)uracil = 6,7-dimethyl-8-(1-D-ribityl)lumazine + phosphate + 2 H2O + H(+). The protein operates within cofactor biosynthesis; riboflavin biosynthesis; riboflavin from 2-hydroxy-3-oxobutyl phosphate and 5-amino-6-(D-ribitylamino)uracil: step 1/2. Functionally, catalyzes the formation of 6,7-dimethyl-8-ribityllumazine by condensation of 5-amino-6-(D-ribitylamino)uracil with 3,4-dihydroxy-2-butanone 4-phosphate. This is the penultimate step in the biosynthesis of riboflavin. This chain is 6,7-dimethyl-8-ribityllumazine synthase, found in Pelobacter propionicus (strain DSM 2379 / NBRC 103807 / OttBd1).